A 291-amino-acid polypeptide reads, in one-letter code: Trimeric intracellular cation channel type B (291 aa).

Residues 1-19 (MDSPWDELALAFSRTSMFP) lie on the Lumenal side of the membrane. A helical membrane pass occupies residues 20-33 (FFDIAHYLVSVMAV). Residues 34–50 (KRQPGAAALAWKNPISS) lie on the Cytoplasmic side of the membrane. The helical transmembrane segment at 51–70 (WFTAMLHCFGGGILSCLLLA) threads the bilayer. The Lumenal segment spans residues 71-82 (EPPLKFLANHTN). Residues 83-99 (ILLASSIWYITFFCPHD) traverse the membrane as a helical segment. Over 100–104 (LVSQG) the chain is Cytoplasmic. Residues 105-121 (YSYLPVQLLASGMKEVT) traverse the membrane as a helical segment. Lys-118 and Arg-122 together coordinate a 1,2-diacyl-sn-glycero-3-phospho-(1D-myo-inositol-4,5-bisphosphate). The Lumenal segment spans residues 122-139 (RTWKIVGGVTHANSYYKN). A helical membrane pass occupies residues 140–156 (GWIVMIAIGWARGAGGT). The Cytoplasmic portion of the chain corresponds to 157–179 (IITNFERLVKGDWKPEGDEWLKM). The helical transmembrane segment at 180–195 (SYPAKVTLLGSVIFTF) threads the bilayer. Residues 196 to 207 (QHTQHLAISKHN) lie on the Lumenal side of the membrane. A helical membrane pass occupies residues 208-227 (LMFLYTIFIVATKITMMTTQ). At 228–291 (TSTMTFAPFE…VKKKHTKKNE (64 aa)) the chain is on the cytoplasmic side. The segment at 256–291 (KKSEAKSPSNGVGSLASKPVDVASDNVKKKHTKKNE) is disordered. Residue Ser-262 is modified to Phosphoserine.

It belongs to the TMEM38 family. In terms of assembly, homotrimer; conformation seems to be controled by binding to diacylglycerol (DAG).

Its subcellular location is the endoplasmic reticulum membrane. It carries out the reaction K(+)(in) = K(+)(out). With respect to regulation, channel activity is activated by increased cytosolic Ca(2+) levels and blocked by luminal high Ca(2+) levels. In terms of biological role, intracellular monovalent cation channel required for maintenance of rapid intracellular calcium release. Acts as a potassium counter-ion channel that functions in synchronization with calcium release from intracellular stores. Activated by increased cytosolic Ca(2+) levels. The chain is Trimeric intracellular cation channel type B from Homo sapiens (Human).